The primary structure comprises 248 residues: Leucyl/phenylalanyl-tRNA--protein transferase (248 aa).

Belongs to the L/F-transferase family.

The protein localises to the cytoplasm. It carries out the reaction N-terminal L-lysyl-[protein] + L-leucyl-tRNA(Leu) = N-terminal L-leucyl-L-lysyl-[protein] + tRNA(Leu) + H(+). The enzyme catalyses N-terminal L-arginyl-[protein] + L-leucyl-tRNA(Leu) = N-terminal L-leucyl-L-arginyl-[protein] + tRNA(Leu) + H(+). The catalysed reaction is L-phenylalanyl-tRNA(Phe) + an N-terminal L-alpha-aminoacyl-[protein] = an N-terminal L-phenylalanyl-L-alpha-aminoacyl-[protein] + tRNA(Phe). Its function is as follows. Functions in the N-end rule pathway of protein degradation where it conjugates Leu, Phe and, less efficiently, Met from aminoacyl-tRNAs to the N-termini of proteins containing an N-terminal arginine or lysine. This Rhizorhabdus wittichii (strain DSM 6014 / CCUG 31198 / JCM 15750 / NBRC 105917 / EY 4224 / RW1) (Sphingomonas wittichii) protein is Leucyl/phenylalanyl-tRNA--protein transferase.